We begin with the raw amino-acid sequence, 863 residues long: NACHT, LRR and PYD domains-containing protein 4B (863 aa).

The Pyrin domain occupies 1-93; that stretch reads MASLFSDFGF…TNRATGEIAA (93 aa). An NACHT domain is found at 143–466; the sequence is KMVVLQGVAG…FYLLHSEMDH (324 aa). 149 to 156 is a binding site for ATP; the sequence is GVAGIGKT. LRR repeat units follow at residues 618–643, 683–706, 717–740, 741–763, 765–782, 797–824, and 843–863; these read WHQI…IFNE, SYNL…MLCD, ILDL…LRQN, KSLR…ALCR, LTLP…ACQL, YKCL…AMKD, and SQEF…ENGV.

Belongs to the NLRP family.

Functionally, may be involved in inflammation and recognition of cytosolic pathogen-associated molecular patterns (PAMPs) not intercepted by membrane-bound receptors. The sequence is that of NACHT, LRR and PYD domains-containing protein 4B (Nlrp4b) from Mus musculus (Mouse).